A 233-amino-acid chain; its full sequence is Demethylmenaquinone methyltransferase (233 aa).

Residues Thr-58, Asp-79, and Asn-106–Ala-107 each bind S-adenosyl-L-methionine.

The protein belongs to the class I-like SAM-binding methyltransferase superfamily. MenG/UbiE family.

It carries out the reaction a 2-demethylmenaquinol + S-adenosyl-L-methionine = a menaquinol + S-adenosyl-L-homocysteine + H(+). It participates in quinol/quinone metabolism; menaquinone biosynthesis; menaquinol from 1,4-dihydroxy-2-naphthoate: step 2/2. Its function is as follows. Methyltransferase required for the conversion of demethylmenaquinol (DMKH2) to menaquinol (MKH2). The sequence is that of Demethylmenaquinone methyltransferase from Bacillus velezensis (strain DSM 23117 / BGSC 10A6 / LMG 26770 / FZB42) (Bacillus amyloliquefaciens subsp. plantarum).